The chain runs to 784 residues: Probable leucine-rich repeat receptor-like protein kinase IMK3 (784 aa).

The N-terminal stretch at 1–48 (MEFITQNQAITSLSMINTDIDQPKASLRSRFLLHLIICLLFFVPPCSS) is a signal peptide. The Extracellular portion of the chain corresponds to 49–409 (QAWDGVVITQ…PSHRNLSTKD (361 aa)). An N-linked (GlcNAc...) asparagine glycan is attached at Asn82. LRR repeat units follow at residues 126–148 (ALRKLSLHDNNLGGSIPMSLGLI), 150–172 (NLRGVQLFNNRLTGSIPASLGVS), 174–197 (FLQTLDLSNNLLSEIIPPNLADSS), 198–220 (KLLRLNLSFNSLSGQIPVSLSRS), 222–242 (SLQFLALDHNNLSGPILDTWG), 247–268 (NLRVLSLDHNSLSGPFPFSLCN), 271–294 (QLQDFSFSHNRIRGTLPSELSKLT), 295–317 (KLRKMDISGNSVSGHIPETLGNI), 319–342 (SLIHLDLSQNKLTGEIPISISDLE), and 343–365 (SLNFFNVSYNNLSGPVPTLLSQK). 3 N-linked (GlcNAc...) asparagine glycosylation sites follow: Asn203, Asn232, and Asn268. Asn316 is a glycosylation site (N-linked (GlcNAc...) asparagine). Residues Asn348, Asn353, Asn367, and Asn404 are each glycosylated (N-linked (GlcNAc...) asparagine). Residues 410-430 (IILIASGALLIVMLILVCVLC) traverse the membrane as a helical segment. The Cytoplasmic segment spans residues 431-784 (CLLRKKANET…VPEASASTSQ (354 aa)). A disordered region spans residues 441 to 467 (KAKGGEAGPGAVAAKTEKGGEAEAGGE). A Protein kinase domain is found at 488 to 773 (CATAEIMGKS…TTATTSEPLI (286 aa)). ATP contacts are provided by residues 494-502 (MGKSTYGTV) and Lys516. The interval 760–784 (RPEETTATTSEPLIDVPEASASTSQ) is disordered.

Belongs to the protein kinase superfamily. Ser/Thr protein kinase family. Interacts with AGL24. Autophosphorylated. In terms of tissue distribution, expressed in meristems, including roots, vegetative, inflorescence and floral meristems, and in embryos.

It is found in the cell membrane. It carries out the reaction L-seryl-[protein] + ATP = O-phospho-L-seryl-[protein] + ADP + H(+). It catalyses the reaction L-threonyl-[protein] + ATP = O-phospho-L-threonyl-[protein] + ADP + H(+). Its function is as follows. Can phosphorylate AGL24. In Arabidopsis thaliana (Mouse-ear cress), this protein is Probable leucine-rich repeat receptor-like protein kinase IMK3 (IMK3).